We begin with the raw amino-acid sequence, 244 residues long: Cell division protein ZipA (244 aa).

The Periplasmic portion of the chain corresponds to 1-4 (MSDM). The helical transmembrane segment at 5 to 25 (AMIRIGILIAGLLLVAAIFLF) threads the bilayer. At 26-244 (GRPKKSPQGR…APPLTKSPRW (219 aa)) the chain is on the cytoplasmic side. The segment at 30 to 91 (KSPQGRRVDK…GAGGNDVGKR (62 aa)) is disordered. Residues 35–50 (RRVDKDDTQPRERREP) show a composition bias toward basic and acidic residues.

This sequence belongs to the ZipA family. In terms of assembly, interacts with FtsZ via their C-terminal domains.

The protein localises to the cell inner membrane. Functionally, essential cell division protein that stabilizes the FtsZ protofilaments by cross-linking them and that serves as a cytoplasmic membrane anchor for the Z ring. Also required for the recruitment to the septal ring of downstream cell division proteins. The chain is Cell division protein ZipA from Xanthomonas campestris pv. campestris (strain ATCC 33913 / DSM 3586 / NCPPB 528 / LMG 568 / P 25).